Reading from the N-terminus, the 167-residue chain is 6,7-dimethyl-8-ribityllumazine synthase (167 aa).

Residues Phe-26, 60-62, and 89-91 contribute to the 5-amino-6-(D-ribitylamino)uracil site; these read AFE and AVI. 94 to 95 contacts (2S)-2-hydroxy-3-oxobutyl phosphate; that stretch reads ET. His-97 serves as the catalytic Proton donor. Phe-122 contributes to the 5-amino-6-(D-ribitylamino)uracil binding site. Residue Arg-136 participates in (2S)-2-hydroxy-3-oxobutyl phosphate binding.

Belongs to the DMRL synthase family. In terms of assembly, forms an icosahedral capsid composed of 60 subunits, arranged as a dodecamer of pentamers.

The enzyme catalyses (2S)-2-hydroxy-3-oxobutyl phosphate + 5-amino-6-(D-ribitylamino)uracil = 6,7-dimethyl-8-(1-D-ribityl)lumazine + phosphate + 2 H2O + H(+). It participates in cofactor biosynthesis; riboflavin biosynthesis; riboflavin from 2-hydroxy-3-oxobutyl phosphate and 5-amino-6-(D-ribitylamino)uracil: step 1/2. In terms of biological role, catalyzes the formation of 6,7-dimethyl-8-ribityllumazine by condensation of 5-amino-6-(D-ribitylamino)uracil with 3,4-dihydroxy-2-butanone 4-phosphate. This is the penultimate step in the biosynthesis of riboflavin. In Vesicomyosocius okutanii subsp. Calyptogena okutanii (strain HA), this protein is 6,7-dimethyl-8-ribityllumazine synthase.